A 618-amino-acid chain; its full sequence is uncharacterized protein (618 aa).

4 disordered regions span residues 70 to 118 (SSEY…SLPR), 330 to 352 (LTAR…EVPC), 456 to 552 (TLPV…PILT), and 587 to 618 (IPSD…LKTL). Basic and acidic residues-rich tracts occupy residues 74–84 (KGTRRDSRGYE) and 333–343 (RTEEEPERHVP). Positions 463–481 (TSRPQSPSSLSSKTTGLPL) are enriched in low complexity. 2 stretches are compositionally biased toward polar residues: residues 485 to 516 (KPTS…NSLM) and 609 to 618 (SDPSHSLKTL).

This is an uncharacterized protein from Danio rerio (Zebrafish).